Here is a 255-residue protein sequence, read N- to C-terminus: MRFTVLIPARLASTRLPNKPLADMGGAPMVVRVAQRAMQSTAARTVVATDSTDIIDKCAAFGVAAVLTRADHPSGSDRLAEACTALGLADDDIVVNVQGDEPLIDPALIDAVARLLNERPDCAMSTAAHSIDQMADLLNPNVVKVVLDARQTALYFSRSPIPAARDFAGKPWWEDGEKGCKLPKPLRHVGIYGYRVGFLRQFPTLPQAPLEQLESLEQLRALWHGHRIAVHITDEAPGPGVDTPEDLARARQFFP.

The protein belongs to the KdsB family.

Its subcellular location is the cytoplasm. It catalyses the reaction 3-deoxy-alpha-D-manno-oct-2-ulosonate + CTP = CMP-3-deoxy-beta-D-manno-octulosonate + diphosphate. The protein operates within nucleotide-sugar biosynthesis; CMP-3-deoxy-D-manno-octulosonate biosynthesis; CMP-3-deoxy-D-manno-octulosonate from 3-deoxy-D-manno-octulosonate and CTP: step 1/1. Its pathway is bacterial outer membrane biogenesis; lipopolysaccharide biosynthesis. Its function is as follows. Activates KDO (a required 8-carbon sugar) for incorporation into bacterial lipopolysaccharide in Gram-negative bacteria. This Polaromonas sp. (strain JS666 / ATCC BAA-500) protein is 3-deoxy-manno-octulosonate cytidylyltransferase.